Here is a 373-residue protein sequence, read N- to C-terminus: Alanine dehydrogenase (373 aa).

Residues Arg-15 and Lys-74 each contribute to the substrate site. His-95 (proton donor/acceptor) is an active-site residue. NAD(+) contacts are provided by residues Ser-133, 177–178 (QA), Asp-197, Ser-219, 238–239 (VL), 266–269 (IAID), and 298–301 (VANM). Asp-269 (proton donor/acceptor) is an active-site residue.

Belongs to the AlaDH/PNT family. As to quaternary structure, homohexamer. Trimer of dimer.

The catalysed reaction is L-alanine + NAD(+) + H2O = pyruvate + NH4(+) + NADH + H(+). It functions in the pathway amino-acid degradation; L-alanine degradation via dehydrogenase pathway; NH(3) and pyruvate from L-alanine: step 1/1. Catalyzes the reversible reductive amination of pyruvate to L-alanine. May play a role in cell wall synthesis as L-alanine is an important constituent of the peptidoglycan layer. This Staphylococcus haemolyticus (strain JCSC1435) protein is Alanine dehydrogenase (ald).